The primary structure comprises 1440 residues: Genome polyprotein (1440 aa).

A propeptide spans 32–53 (ER anchor for the capsid protein C, removed in mature form by serine protease NS3); sequence GGNEGSIMWLASLAVVIACAGA. The chain crosses the membrane as a helical span at residues 36–56; that stretch reads GSIMWLASLAVVIACAGAMKL. At 57–180 the chain is on the extracellular side; sequence SNFQGKLLMT…ATRYLMKTEN (124 aa). N-linked (GlcNAc...) asparagine; by host glycosylation is present at Asn68. Residues 181 to 201 traverse the membrane as a helical segment; sequence WIVRNPGYAFLAAILGWMLGS. Topologically, residues 202-207 are cytoplasmic; it reads NNGQRR. The chain crosses the membrane as a helical span at residues 208–222; sequence WYFTILLLLVAPAYS. Over 223-674 the chain is Extracellular; it reads FNCLGMGNRD…QVFGGAFRTL (452 aa). Cystine bridges form between Cys225-Cys252, Cys282-Cys338, Cys282-Cys343, Cys296-Cys327, Cys314-Cys338, and Cys314-Cys343. The interval 320-333 is fusion peptide; sequence DRGWGNGCGLFGKG. Asn376 is a glycosylation site (N-linked (GlcNAc...) asparagine; by host). Disulfide bonds link Cys412–Cys509 and Cys526–Cys557. The helical transmembrane segment at 675–695 threads the bilayer; sequence FGGMSWITQGLMGALLLWMGV. The Cytoplasmic portion of the chain corresponds to 696–701; sequence NARDRS. A helical transmembrane segment spans residues 702-722; it reads IALAFLATGGVLVFLATNVHA. Topologically, residues 723–1147 are extracellular; it reads DTGCAIDITR…AFAEANSGGD (425 aa). 6 cysteine pairs are disulfide-bonded: Cys726–Cys737, Cys777–Cys865, Cys901–Cys945, Cys1002–Cys1051, Cys1013–Cys1034, and Cys1035–Cys1038. Asn852 and Asn929 each carry an N-linked (GlcNAc...) asparagine; by host glycan. The helical transmembrane segment at 1148-1168 threads the bilayer; sequence VLHLALIAVFKIQPAFLVMNM. The Cytoplasmic portion of the chain corresponds to 1169–1178; sequence LSTRWTNQEN. Residues 1179–1199 traverse the membrane as a helical segment; the sequence is VVLVLGAAFFHLASVDLQIGV. A topological domain (lumenal) is located at residue His1200. The helical transmembrane segment at 1201–1221 threads the bilayer; it reads GILNAAAIAWMIVRAITFPTT. The Cytoplasmic segment spans residues 1222–1237; that stretch reads SSVTMPVLALLTPGMR. A helical transmembrane segment spans residues 1238 to 1258; sequence ALYLDTYRIILLVIGICSLLQ. The Lumenal segment spans residues 1259 to 1269; sequence ERKKTMAKKKG. The chain crosses the membrane as a helical span at residues 1270–1290; the sequence is AVLLGLALTSTGWFSPTTIAA. The Cytoplasmic segment spans residues 1291–1302; it reads GLMVCNPNKKRG. The helical transmembrane segment at 1303–1323 threads the bilayer; sequence WPATEFLSAVGLMFAIVGGLA. Topologically, residues 1324-1326 are lumenal; that stretch reads ELD. The chain crosses the membrane as a helical span at residues 1327 to 1347; it reads IESMSIPFMLAGLMAVSYVVS. The Cytoplasmic portion of the chain corresponds to 1348 to 1404; sequence GKATDMWLERAADISWEMDAAITGSSRRLDVKLDDDGDFHLIDDPGVPWKVWVLRMS. The interacts with and activates NS3 protease stretch occupies residues 1355-1394; it reads LERAADISWEMDAAITGSSRRLDVKLDDDGDFHLIDDPGV. Positions 1405–1425 form an intramembrane region, helical; it reads CIGLAALTPWAIVPAAFGYWL. At 1426-1440 the chain is on the cytoplasmic side; the sequence is TLKTTKRGGVFWDTP.

Homodimer. Interacts (via N-terminus) with host EXOC1 (via C-terminus); this interaction results in EXOC1 degradation through the proteasome degradation pathway. In terms of assembly, forms heterodimers with envelope protein E in the endoplasmic reticulum and Golgi. As to quaternary structure, homodimer; in the endoplasmic reticulum and Golgi. Interacts with protein prM. Interacts with non-structural protein 1. Homodimer; Homohexamer when secreted. Interacts with envelope protein E. NS1 interacts with NS4B. Interacts with host complement protein CFH; this interaction leads to the degradation of C3. In terms of assembly, interacts (via N-terminus) with serine protease NS3. As to quaternary structure, forms a heterodimer with serine protease NS3. May form homooligomers. Forms a heterodimer with NS2B. Interacts with non-structural protein 2A (via N-terminus). Interacts with NS4B. Interacts with unphosphorylated RNA-directed RNA polymerase NS5; this interaction stimulates RNA-directed RNA polymerase NS5 guanylyltransferase activity. Mn(2+) serves as cofactor. The cofactor is Mg(2+). Specific enzymatic cleavages in vivo yield mature proteins. Cleavages in the lumen of endoplasmic reticulum are performed by host signal peptidase, whereas cleavages in the cytoplasmic side are performed by serine protease NS3. Signal cleavage at the 2K-4B site requires a prior NS3 protease-mediated cleavage at the 4A-2K site. Post-translationally, cleaved in post-Golgi vesicles by a host furin, releasing the mature small envelope protein M, and peptide pr. This cleavage is incomplete as up to 30% of viral particles still carry uncleaved prM. In terms of processing, N-glycosylated. N-glycosylated. The excreted form is glycosylated and this is required for efficient secretion of the protein from infected cells. Post-translationally, RNA-directed RNA polymerase NS5: Phosphorylated on serines residues. This phosphorylation may trigger NS5 nuclear localization.

Its subcellular location is the virion. It localises to the host nucleus. The protein resides in the host cytoplasm. The protein localises to the host perinuclear region. It is found in the secreted. Its subcellular location is the virion membrane. It localises to the host endoplasmic reticulum membrane. The enzyme catalyses Selective hydrolysis of -Xaa-Xaa-|-Yaa- bonds in which each of the Xaa can be either Arg or Lys and Yaa can be either Ser or Ala.. It catalyses the reaction a ribonucleoside 5'-triphosphate + H2O = a ribonucleoside 5'-diphosphate + phosphate + H(+). It carries out the reaction ATP + H2O = ADP + phosphate + H(+). Plays a role in virus budding by binding to the cell membrane and gathering the viral RNA into a nucleocapsid that forms the core of a mature virus particle. During virus entry, may induce genome penetration into the host cytoplasm after hemifusion induced by the surface proteins. Can migrate to the cell nucleus where it modulates host functions. Overcomes the anti-viral effects of host EXOC1 by sequestering and degrading the latter through the proteasome degradation pathway. Functionally, inhibits RNA silencing by interfering with host Dicer. Its function is as follows. Prevents premature fusion activity of envelope proteins in trans-Golgi by binding to envelope protein E at pH 6.0. After virion release in extracellular space, gets dissociated from E dimers. In terms of biological role, acts as a chaperone for envelope protein E during intracellular virion assembly by masking and inactivating envelope protein E fusion peptide. prM is the only viral peptide matured by host furin in the trans-Golgi network probably to avoid catastrophic activation of the viral fusion activity in acidic Golgi compartment prior to virion release. prM-E cleavage is inefficient, and many virions are only partially matured. These uncleaved prM would play a role in immune evasion. May play a role in virus budding. Exerts cytotoxic effects by activating a mitochondrial apoptotic pathway through M ectodomain. May display a viroporin activity. Functionally, binds to host cell surface receptor and mediates fusion between viral and cellular membranes. Envelope protein is synthesized in the endoplasmic reticulum in the form of heterodimer with protein prM. They play a role in virion budding in the ER, and the newly formed immature particle is covered with 60 spikes composed of heterodimer between precursor prM and envelope protein E. The virion is transported to the Golgi apparatus where the low pH causes dissociation of PrM-E heterodimers and formation of E homodimers. prM-E cleavage is inefficient, and many virions are only partially matured. These uncleaved prM would play a role in immune evasion. Its function is as follows. Involved in immune evasion, pathogenesis and viral replication. Once cleaved off the polyprotein, is targeted to three destinations: the viral replication cycle, the plasma membrane and the extracellular compartment. Essential for viral replication. Required for formation of the replication complex and recruitment of other non-structural proteins to the ER-derived membrane structures. Excreted as a hexameric lipoparticle that plays a role against host immune response. Antagonizing the complement function. Binds to the host macrophages and dendritic cells. Inhibits signal transduction originating from Toll-like receptor 3 (TLR3). In terms of biological role, component of the viral RNA replication complex that functions in virion assembly and antagonizes the host alpha/beta interferon antiviral response. Required cofactor for the serine protease function of NS3. May have membrane-destabilizing activity and form viroporins. Functionally, displays three enzymatic activities: serine protease, NTPase and RNA helicase. NS3 serine protease, in association with NS2B, performs its autocleavage and cleaves the polyprotein at dibasic sites in the cytoplasm: C-prM, NS2A-NS2B, NS2B-NS3, NS3-NS4A, NS4A-2K and NS4B-NS5. NS3 RNA helicase binds RNA and unwinds dsRNA in the 3' to 5' direction. Its function is as follows. Non-structural protein 4A: Regulates the ATPase activity of the NS3 helicase activity. NS4A allows NS3 helicase to conserve energy during unwinding. In terms of biological role, peptide 2k: Functions as a signal peptide for NS4B and is required for the interferon antagonism activity of the latter. Non-structural protein 4B: Induces the formation of ER-derived membrane vesicles where the viral replication takes place. Inhibits interferon (IFN)-induced host STAT1 phosphorylation and nuclear translocation, thereby preventing the establishment of cellular antiviral state by blocking the IFN-alpha/beta pathway. Inhibits STAT2 translocation in the nucleus after IFN-alpha treatment. Functionally, RNA-directed RNA polymerase NS5: Replicates the viral (+) and (-) RNA genome. Performs the capping of genomes in the cytoplasm. NS5 methylates viral RNA cap at guanine N-7 and ribose 2'-O positions. Besides its role in RNA genome replication, also prevents the establishment of cellular antiviral state by blocking the interferon-alpha/beta (IFN-alpha/beta) signaling pathway. Inhibits host TYK2 and STAT2 phosphorylation, thereby preventing activation of JAK-STAT signaling pathway. The chain is Genome polyprotein from Japanese encephalitis virus (strain Nakayama) (JEV).